The primary structure comprises 410 residues: MKIYLVGGAVRDALLGQPAGDRDWVVVGADQARMEAQGFKPVGKDFPVFLHPRSGEEYALARTERKSGRGYRGFVVDADPLVTLEEDLLRRDFTINAIARDEDTGEFFDPYNGARDLQARVLRHVGPAFVEDPVRVLRAARFMARLAPLGFTIAPETAALMREMAASGELDSLVPERVWQELRRALTCAQPSAFLRTLHDTDGLRAILPEIDALYGVPQRAQFHPEVDTGIHQEMVSDMAARIAPGDALVGFAALTHDLGKALTPPEQWPRHIMHEQRGVAPLQALCERLKVPQDYRQLAVIACREHLNVHRLPELRDRTVHELLVRCDAFRRPERIAQLALVCEADKRGRLGSEEAAYPQGAELKRLHAAASAINARDLAADGLQGPQIGEALTKARIAAITAARKTSA.

The ATP site is built by glycine 8 and arginine 11. Positions 8 and 11 each coordinate CTP. Mg(2+) contacts are provided by aspartate 21 and aspartate 23. ATP is bound by residues arginine 91, arginine 138, and arginine 141. Residues arginine 91, arginine 138, and arginine 141 each coordinate CTP. The 119-residue stretch at 229-347 (TGIHQEMVSD…AQLALVCEAD (119 aa)) folds into the HD domain.

Belongs to the tRNA nucleotidyltransferase/poly(A) polymerase family. Bacterial CCA-adding enzyme type 1 subfamily. As to quaternary structure, monomer. Can also form homodimers and oligomers. Requires Mg(2+) as cofactor. Ni(2+) serves as cofactor.

It carries out the reaction a tRNA precursor + 2 CTP + ATP = a tRNA with a 3' CCA end + 3 diphosphate. The catalysed reaction is a tRNA with a 3' CCA end + 2 CTP + ATP = a tRNA with a 3' CCACCA end + 3 diphosphate. Its function is as follows. Catalyzes the addition and repair of the essential 3'-terminal CCA sequence in tRNAs without using a nucleic acid template. Adds these three nucleotides in the order of C, C, and A to the tRNA nucleotide-73, using CTP and ATP as substrates and producing inorganic pyrophosphate. tRNA 3'-terminal CCA addition is required both for tRNA processing and repair. Also involved in tRNA surveillance by mediating tandem CCA addition to generate a CCACCA at the 3' terminus of unstable tRNAs. While stable tRNAs receive only 3'-terminal CCA, unstable tRNAs are marked with CCACCA and rapidly degraded. The protein is Multifunctional CCA protein of Xanthomonas oryzae pv. oryzae (strain MAFF 311018).